The following is a 359-amino-acid chain: Probable dual-specificity RNA methyltransferase RlmN (359 aa).

Glutamate 91 functions as the Proton acceptor in the catalytic mechanism. In terms of domain architecture, Radical SAM core spans 97 to 329; that stretch reads QHYGHSVCVT…KKNGVNCVVR (233 aa). Cysteine 104 and cysteine 340 form a disulfide bridge. Residues cysteine 111, cysteine 115, and cysteine 118 each coordinate [4Fe-4S] cluster. Residues 163-164, serine 195, 218-220, and asparagine 296 contribute to the S-adenosyl-L-methionine site; these read GE and SLH. Cysteine 340 serves as the catalytic S-methylcysteine intermediate.

It belongs to the radical SAM superfamily. RlmN family. Requires [4Fe-4S] cluster as cofactor.

It localises to the cytoplasm. It carries out the reaction adenosine(2503) in 23S rRNA + 2 reduced [2Fe-2S]-[ferredoxin] + 2 S-adenosyl-L-methionine = 2-methyladenosine(2503) in 23S rRNA + 5'-deoxyadenosine + L-methionine + 2 oxidized [2Fe-2S]-[ferredoxin] + S-adenosyl-L-homocysteine. It catalyses the reaction adenosine(37) in tRNA + 2 reduced [2Fe-2S]-[ferredoxin] + 2 S-adenosyl-L-methionine = 2-methyladenosine(37) in tRNA + 5'-deoxyadenosine + L-methionine + 2 oxidized [2Fe-2S]-[ferredoxin] + S-adenosyl-L-homocysteine. Functionally, specifically methylates position 2 of adenine 2503 in 23S rRNA and position 2 of adenine 37 in tRNAs. The protein is Probable dual-specificity RNA methyltransferase RlmN of Streptococcus pyogenes serotype M18 (strain MGAS8232).